The primary structure comprises 376 residues: Putative E3 ubiquitin-protein ligase XBAT34 (376 aa).

2 ANK repeats span residues 41 to 71 (LGRTPLILACTNDDLYDVAKTLLELGSNVNA) and 77 to 106 (NGGTPLHHAAKRGLVHTVKLLLSHGANPLV). The RING-type zinc-finger motif lies at 325 to 364 (CVICVDAPSEAVCVPCGHVAGCISCLKEIENKKMGCPVCR).

It carries out the reaction S-ubiquitinyl-[E2 ubiquitin-conjugating enzyme]-L-cysteine + [acceptor protein]-L-lysine = [E2 ubiquitin-conjugating enzyme]-L-cysteine + N(6)-ubiquitinyl-[acceptor protein]-L-lysine.. The protein operates within protein modification; protein ubiquitination. No E3 ubiquitin-protein ligase activity observed when associated with the E2 enzyme UBC8 in vitro. The chain is Putative E3 ubiquitin-protein ligase XBAT34 (XBAT34) from Arabidopsis thaliana (Mouse-ear cress).